Consider the following 142-residue polypeptide: Small ribosomal subunit protein uS9 (142 aa).

This sequence belongs to the universal ribosomal protein uS9 family. Component of the small ribosomal subunit. Mature ribosomes consist of a small (40S) and a large (60S) subunit. The 40S subunit contains about 32 different proteins and 1 molecule of RNA (18S). The 60S subunit contains 45 different proteins and 3 molecules of RNA (25S, 5.8S and 5S).

The protein localises to the cytoplasm. In terms of biological role, component of the ribosome, a large ribonucleoprotein complex responsible for the synthesis of proteins in the cell. The small ribosomal subunit (SSU) binds messenger RNAs (mRNAs) and translates the encoded message by selecting cognate aminoacyl-transfer RNA (tRNA) molecules. The large subunit (LSU) contains the ribosomal catalytic site termed the peptidyl transferase center (PTC), which catalyzes the formation of peptide bonds, thereby polymerizing the amino acids delivered by tRNAs into a polypeptide chain. The nascent polypeptides leave the ribosome through a tunnel in the LSU and interact with protein factors that function in enzymatic processing, targeting, and the membrane insertion of nascent chains at the exit of the ribosomal tunnel. In Candida albicans (strain SC5314 / ATCC MYA-2876) (Yeast), this protein is Small ribosomal subunit protein uS9 (RPS16A).